A 251-amino-acid chain; its full sequence is 5'-nucleotidase SurE (251 aa).

Residues Asp-8, Asp-9, Ser-39, and Asn-95 each contribute to the a divalent metal cation site.

Belongs to the SurE nucleotidase family. The cofactor is a divalent metal cation.

It localises to the cytoplasm. The catalysed reaction is a ribonucleoside 5'-phosphate + H2O = a ribonucleoside + phosphate. Functionally, nucleotidase that shows phosphatase activity on nucleoside 5'-monophosphates. The chain is 5'-nucleotidase SurE from Ralstonia nicotianae (strain ATCC BAA-1114 / GMI1000) (Ralstonia solanacearum).